Consider the following 416-residue polypeptide: Cyclin-L1-1 (416 aa).

Residues 286–416 (KCTAGSANND…DSSKDRRRHH (131 aa)) form a disordered region. Composition is skewed to basic and acidic residues over residues 304-315 (PHEKATDSKKSG), 328-374 (SYER…DKLK), 384-393 (RLKDSGGHSD), and 401-410 (RDRDYRDSSK).

Belongs to the cyclin family. Cyclin L subfamily. In terms of assembly, forms a complex with CDKG1. Interacts with MOS4 and associates with the spliceosome.

Its subcellular location is the nucleus. Cognate cyclin for CDKG1. Required for synapsis and male meiosis, and for the proper splicing of specific resistance (R) genes. Involved in regulation of DNA methylation and transcriptional silencing. The sequence is that of Cyclin-L1-1 (CYCL1-1) from Arabidopsis thaliana (Mouse-ear cress).